The sequence spans 453 residues: Armadillo repeat-containing X-linked protein 1 (453 aa).

Topologically, residues 1–6 are mitochondrial intermembrane; it reads MGRTRE. 2 mitochondrion outer membrane (MOM)-targeting sequence regions span residues 1 to 6 and 26 to 36; these read MGRTRE and RLAWGRDENEK. Residues 7–29 traverse the membrane as a helical; Signal-anchor segment; the sequence is AGCVAAGVVIGAGACYCVYRLAW. The Cytoplasmic portion of the chain corresponds to 30 to 453; the sequence is GRDENEKIWD…VKVLKVLTKL (424 aa). Disordered regions lie at residues 58-77 and 132-182; these read AKTN…SEVK and ISGN…RAPA. Residues 167–177 are compositionally biased toward basic residues; that stretch reads GKSKGKARSKS. ARM repeat units lie at residues 195–235, 237–276, 358–398, and 415–453; these read PYKI…NNAA, SFNQ…NLSV, PAMT…NIND, and SSLF…LTKL.

This sequence belongs to the eutherian X-chromosome-specific Armcx family. As to quaternary structure, interacts with MIRO1. In terms of tissue distribution, expressed at high levels ovary, heart, testis, prostate, brain, spleen and colon. Expressed at very low levels in liver and thymus. Not expressed in peripheral blood leukocytes. Not or reduced expressed in lung, prostate, colon, pancreas and ovarian carcinomas.

The protein resides in the mitochondrion. It localises to the mitochondrion outer membrane. Its function is as follows. Regulates mitochondrial transport during axon regeneration. Increases the proportion of motile mitochondria by recruiting stationary mitochondria into the motile pool. Enhances mitochondria movement and neurite growth in both adult axons and embryonic neurons. Promotes neuronal survival and axon regeneration after nerve injury. May link mitochondria to the Trak1-kinesin motor complex via its interaction with MIRO1. This Homo sapiens (Human) protein is Armadillo repeat-containing X-linked protein 1 (ARMCX1).